Here is a 322-residue protein sequence, read N- to C-terminus: Lymphatic vessel endothelial hyaluronic acid receptor 1 (322 aa).

A signal peptide spans 1–19 (MARCFSLVLLLTSIWTTRL). Topologically, residues 20–238 (LVQGSLRAEE…EAAGFGGVPT (219 aa)) are extracellular. The region spanning 40–130 (GITLVSKKAN…SRQFAAYCYN (91 aa)) is the Link domain. Asn53 carries an N-linked (GlcNAc...) asparagine glycan. Disulfide bonds link Cys61/Cys128 and Cys85/Cys106. Asn130 carries an N-linked (GlcNAc...) asparagine glycan. The chain crosses the membrane as a helical span at residues 239-259 (ALLVLALLFFGAAAGLGFCYV). Topologically, residues 260–322 (KRYVKAFPFT…TTVRCLEAEV (63 aa)) are cytoplasmic. A compositionally biased stretch (basic and acidic residues) spans 279 to 309 (ETKVVKEEKANDSNPNEESKKTDKNPEESKS). The segment at 279 to 322 (ETKVVKEEKANDSNPNEESKKTDKNPEESKSPSKTTVRCLEAEV) is disordered.

As to quaternary structure, homodimer; disulfide-linked. Interacts with PDGFB and IGFBP3. Forms a transient ternary complex with PDGFB and PDGFRB in TGN. O-glycosylated. Mainly expressed in endothelial cells lining lymphatic vessels.

The protein localises to the cell membrane. Its function is as follows. Ligand-specific transporter trafficking between intracellular organelles (TGN) and the plasma membrane. Plays a role in autocrine regulation of cell growth mediated by growth regulators containing cell surface retention sequence binding (CRS). May act as a hyaluronan (HA) transporter, either mediating its uptake for catabolism within lymphatic endothelial cells themselves, or its transport into the lumen of afferent lymphatic vessels for subsequent re-uptake and degradation in lymph nodes. Binds to pericelluar hyaluronan matrices deposited on the surface of leukocytes and facilitates cell adhesion and migration through lymphatic endothelium. The chain is Lymphatic vessel endothelial hyaluronic acid receptor 1 (LYVE1) from Homo sapiens (Human).